A 1039-amino-acid chain; its full sequence is MFNNNNNDKINNTMMSNNPSGQIINLESIDCNSNLSNTTSIKDSNNNNNNNNNNNNNINNNINKINPNIDRKVLDDFNSKSIKIIDNKLNKKNSKKNLYSKEVDDDINKINLNKKIIPNETNSNNSNNNNNNSNNNNNNNNNNNNFNYNNNINSNNNIINNNNNINNNSNNNNNNNNNNSISLYVDTQEKSKKKVNAESLRGPIIFQNFILYTFFLIVIGTAEGTSWAPEIRVANFVPYCVMCVVLLEFNRLHKKPLLRIIFPLYTSNIPFAYMCIFSREARKYVLISLLFFASCLCIFLQSGIPDLRKHIVIFCIIFMINYGCCILFMDWFYIDTTGTKPYRGRILATKIHWGEEATILVSMALLGCIFIVLEKFIKSYARCVAEQHYQIQCLQKEKEKLQTEINISLKKLDLDTPIEKIMDILRSMINTSESENDKKQLIKVIAVLGSNKLYDPDFKFETCTDDAEVYSWLQSMLNREVGYSNVNNNNNMMMIENNNNNTIINNNLIEPTSPNFSKKLTSSDLIPRIRSMPEITDQGIQELIINNFLEWDFPVFQLSEITDGNPLFYMSYFLFSRHKFFEKFKIGIDCFKNFMRKIESGYDSTNPYHNSIHATDVLHNLNYFIEKSFGKFLTDIELFSMILAAIIHDFKHPGVNNHFQINSKSRLALKYNDKSILENYHLHQAFIIMNEPESGILLKLSDSVRKEIRETIIALVLSTDMAKHFNLVGRFKSMANSFPTTTNTQQPSSSSSSSSSTTIPTSTITPTPNSTTSTTTTTTTTTTTTNNNNNNNSNNNSLNNIINNCSSSNGSMGASGADNSNSNNTNNSNSNNQNQCGSSIFLNSNKKDRLLLMKISIKCADISNPSKPWNLYTNWSNRVTSEFYKQGDKEKESNMDVSAFMDRNKPATTKCQINFINIFVAPIYEIWSHHFPQFKLCYQNILSNLSRLEIEQQQQLQLQQQQQQQLQQQQQQQQQIHQQQQQQLHHHQQQQQFQHQQHQQQLQHQHQQQLNNQNQNQNQSNSNNSNSFGLTQSNYLIVV.

An N-terminal signal peptide occupies residues 1-29 (MFNNNNNDKINNTMMSNNPSGQIINLESI). Residues N11, N34, and N37 are each glycosylated (N-linked (GlcNAc...) asparagine). The Extracellular segment spans residues 30–201 (DCNSNLSNTT…KKKVNAESLR (172 aa)). 2 disordered regions span residues 40 to 63 (SIKDSNNNNNNNNNNNNNINNNIN) and 116 to 181 (IIPN…NNSI). Residues 45 to 63 (NNNNNNNNNNNNNINNNIN) are compositionally biased toward low complexity. N119, N124, N131, N167, and N178 each carry an N-linked (GlcNAc...) asparagine glycan. A helical transmembrane segment spans residues 202–222 (GPIIFQNFILYTFFLIVIGTA). The Cytoplasmic segment spans residues 223 to 226 (EGTS). The helical transmembrane segment at 227-247 (WAPEIRVANFVPYCVMCVVLL) threads the bilayer. At 248-256 (EFNRLHKKP) the chain is on the extracellular side. Residues 257–277 (LLRIIFPLYTSNIPFAYMCIF) form a helical membrane-spanning segment. Over 278-283 (SREARK) the chain is Cytoplasmic. Residues 284–304 (YVLISLLFFASCLCIFLQSGI) form a helical membrane-spanning segment. The Extracellular portion of the chain corresponds to 305–310 (PDLRKH). Residues 311–331 (IVIFCIIFMINYGCCILFMDW) traverse the membrane as a helical segment. Topologically, residues 332 to 356 (FYIDTTGTKPYRGRILATKIHWGEE) are cytoplasmic. Residues 357 to 377 (ATILVSMALLGCIFIVLEKFI) form a helical membrane-spanning segment. At 378–1039 (KSYARCVAEQ…LTQSNYLIVV (662 aa)) the chain is on the extracellular side. Residues 384–414 (VAEQHYQIQCLQKEKEKLQTEINISLKKLDL) adopt a coiled-coil conformation. N-linked (GlcNAc...) asparagine glycosylation is found at N406, N430, N500, and N515. Residues 533–973 (PEITDQGIQE…QQLQQQQQQQ (441 aa)) enclose the PDEase domain. H609 (proton donor) is an active-site residue. The a divalent metal cation site is built by H613, H648, and D649. Residues 738–835 (FPTTTNTQQP…NNSNSNNQNQ (98 aa)) form a disordered region. A compositionally biased stretch (low complexity) spans 740–835 (TTTNTQQPSS…NNSNSNNQNQ (96 aa)). N769, N791, N795, N804, N809, N823, and N826 each carry an N-linked (GlcNAc...) asparagine glycan. D861 contributes to the a divalent metal cation binding site. N-linked (GlcNAc...) asparagine glycans are attached at residues N874, N944, N1018, and N1023. A compositionally biased stretch (low complexity) spans 978–1019 (QQQQQQLHHHQQQQQFQHQQHQQQLQHQHQQQLNNQNQNQNQ). Positions 978–1033 (QQQQQQLHHHQQQQQFQHQQHQQQLQHQHQQQLNNQNQNQNQSNSNNSNSFGLTQS) are disordered. Positions 1020–1033 (SNSNNSNSFGLTQS) are enriched in polar residues.

This sequence belongs to the cyclic nucleotide phosphodiesterase family. A divalent metal cation serves as cofactor.

The protein resides in the cell membrane. The catalysed reaction is 3',5'-cyclic AMP + H2O = AMP + H(+). With respect to regulation, inhibited by 3-isobutyl-1-methylxanthine (IBMX). In terms of biological role, phosphodiesterase specific for extracellular cAMP. Involved in the degradation of extracellular cAMP specifically during multicellular development. The chain is 3',5'-cyclic-AMP phosphodiesterase 4 (Pde4) from Dictyostelium discoideum (Social amoeba).